Consider the following 659-residue polypeptide: Pollen receptor-like kinase 6 (659 aa).

The first 26 residues, 1-26 (MAAAVLNPGFFLLILLLSFSISPSLQ), serve as a signal peptide directing secretion. The Extracellular portion of the chain corresponds to 27–266 (YVSESEPLVR…SVPETSNKAA (240 aa)). Cysteines 58 and 67 form a disulfide. 5 LRR repeats span residues 95–118 (LPNL…FFKL), 120–142 (GLKS…FFKD), 143–167 (MSKL…ITQL), 168–190 (PQLE…EFGS), and 192–214 (KNLK…SIAD). Asn-128 carries an N-linked (GlcNAc...) asparagine glycan. Asn-179 carries an N-linked (GlcNAc...) asparagine glycan. A glycan (N-linked (GlcNAc...) asparagine) is linked at Asn-221. The segment at 226-242 (EYLCGPVVDVGCENIEL) is LURE peptides binding. An intrachain disulfide couples Cys-229 to Cys-237. The disordered stretch occupies residues 241 to 260 (ELNDPQEGQPPSKPSSSVPE). The helical transmembrane segment at 267–287 (INAIMVSISLLLLFFIIVGVI) threads the bilayer. The Cytoplasmic segment spans residues 288–659 (KRRNKKKNPD…AVRRIEQVKT (372 aa)). Residues 312-354 (VRISESSSTTAKRSTDSSRKRGGHSDDGSTKKGVSNIGKGGNG) are disordered. The segment covering 324-341 (RSTDSSRKRGGHSDDGST) has biased composition (basic and acidic residues). Positions 384-659 (KAAAEVLGNG…AVRRIEQVKT (276 aa)) constitute a Protein kinase domain. ATP is bound by residues 390–398 (LGNGSLGSA) and Lys-412. Position 464 is a phosphoserine (Ser-464). Residues Thr-484 and Thr-557 each carry the phosphothreonine modification. At Ser-561 the chain carries Phosphoserine.

The protein belongs to the protein kinase superfamily. Ser/Thr protein kinase family. As to quaternary structure, interacts with ROPGEF8, ROPGEF9, ROPGEF12, ROPGEF13, PRK3, LIP1 and LIP2. Binds to LURE peptides via its LRR repeats; interacts with LURE1.1, LURE1.2, LURE1.3 and LURE1.4. Expressed specifically in the pollen tube, predominantly at the tip.

The protein localises to the cell membrane. It is found in the cytoplasmic granule. Key receptor for sensing species-specific attractants in cooperation with other pollen receptor-like kinases. Essential for pollen tube reorientation toward attractant peptides. This chain is Pollen receptor-like kinase 6, found in Arabidopsis thaliana (Mouse-ear cress).